The following is a 609-amino-acid chain: NURS complex subunit pir2 (609 aa).

A compositionally biased stretch (basic and acidic residues) spans 1-25 (MSEVHQESEVEYSRWKRERSPERSQ). 2 disordered regions span residues 1–60 (MSEV…RASG) and 187–210 (EKPS…QLSK). Low complexity predominate over residues 27–36 (RSQSPPGEQS). 2 positions are modified to phosphoserine: serine 28 and serine 30. Basic and acidic residues predominate over residues 37 to 57 (AYHRERSPLRKRGNYYDDRTR). Residues 201–210 (LPSNDPQLSK) are compositionally biased toward polar residues. The C2H2-type zinc-finger motif lies at 474 to 499 (YRCHVGTCAKLFLGPEFVRKHINKKH).

The protein belongs to the ARS2 family. In terms of assembly, interacts with ccr4.

It is found in the nucleus. This Schizosaccharomyces pombe (strain 972 / ATCC 24843) (Fission yeast) protein is NURS complex subunit pir2.